The chain runs to 199 residues: Imidazole glycerol phosphate synthase subunit HisH 2 (199 aa).

Residues 1–199 form the Glutamine amidotransferase type-1 domain; it reads MIAVIDVSGN…NNFLSLESTC (199 aa). C76 (nucleophile) is an active-site residue. Active-site residues include H177 and E179.

In terms of assembly, heterodimer of HisH and HisF.

It localises to the cytoplasm. The enzyme catalyses 5-[(5-phospho-1-deoxy-D-ribulos-1-ylimino)methylamino]-1-(5-phospho-beta-D-ribosyl)imidazole-4-carboxamide + L-glutamine = D-erythro-1-(imidazol-4-yl)glycerol 3-phosphate + 5-amino-1-(5-phospho-beta-D-ribosyl)imidazole-4-carboxamide + L-glutamate + H(+). The catalysed reaction is L-glutamine + H2O = L-glutamate + NH4(+). Its pathway is amino-acid biosynthesis; L-histidine biosynthesis; L-histidine from 5-phospho-alpha-D-ribose 1-diphosphate: step 5/9. Functionally, IGPS catalyzes the conversion of PRFAR and glutamine to IGP, AICAR and glutamate. The HisH subunit provides the glutamine amidotransferase activity that produces the ammonia necessary to HisF for the synthesis of IGP and AICAR. This Legionella pneumophila subsp. pneumophila (strain Philadelphia 1 / ATCC 33152 / DSM 7513) protein is Imidazole glycerol phosphate synthase subunit HisH 2.